A 388-amino-acid polypeptide reads, in one-letter code: Fructose-bisphosphate aldolase, chloroplastic (388 aa).

The N-terminal 38 residues, 1-38 (MASATLLKSSFLPKKSEWGATRQAAAPKPVTVSMVVRA), are a transit peptide targeting the chloroplast. Arg-72 provides a ligand contact to substrate. The Proton acceptor role is filled by Glu-215. The active-site Schiff-base intermediate with dihydroxyacetone-P is the Lys-257. Substrate is bound by residues 299 to 301 (SGG) and Arg-329.

The protein belongs to the class I fructose-bisphosphate aldolase family. In terms of assembly, homotetramer. As to expression, expressed in leaf mesophyll cells.

It localises to the plastid. The protein localises to the chloroplast. The protein resides in the plastoglobule. The catalysed reaction is beta-D-fructose 1,6-bisphosphate = D-glyceraldehyde 3-phosphate + dihydroxyacetone phosphate. The protein operates within carbohydrate degradation; glycolysis; D-glyceraldehyde 3-phosphate and glycerone phosphate from D-glucose: step 4/4. Its function is as follows. Plays a key role in glycolysis and gluconeogenesis. This Oryza sativa subsp. japonica (Rice) protein is Fructose-bisphosphate aldolase, chloroplastic.